A 493-amino-acid chain; its full sequence is Guanosine-5'-triphosphate,3'-diphosphate pyrophosphatase (493 aa).

Belongs to the GppA/Ppx family. GppA subfamily.

It catalyses the reaction guanosine 3'-diphosphate 5'-triphosphate + H2O = guanosine 3',5'-bis(diphosphate) + phosphate + H(+). It functions in the pathway purine metabolism; ppGpp biosynthesis; ppGpp from GTP: step 2/2. Catalyzes the conversion of pppGpp to ppGpp. Guanosine pentaphosphate (pppGpp) is a cytoplasmic signaling molecule which together with ppGpp controls the 'stringent response', an adaptive process that allows bacteria to respond to amino acid starvation, resulting in the coordinated regulation of numerous cellular activities. The chain is Guanosine-5'-triphosphate,3'-diphosphate pyrophosphatase from Salmonella gallinarum (strain 287/91 / NCTC 13346).